Here is a 129-residue protein sequence, read N- to C-terminus: Small ribosomal subunit protein uS11 (129 aa).

Residues 107-129 form a disordered region; that stretch reads IEDVTPVPHDSIRGKGGRRGRRV.

It belongs to the universal ribosomal protein uS11 family. Part of the 30S ribosomal subunit.

In terms of biological role, located on the platform of the 30S subunit. The polypeptide is Small ribosomal subunit protein uS11 (Methanoculleus marisnigri (strain ATCC 35101 / DSM 1498 / JR1)).